Consider the following 507-residue polypeptide: MAVKKNKNVPKQEDPLVQKDEISSIHARIKIFETPFATQVLNPKVSEFCANCLRGPAPGEKLLRCGGCNFSMYCSKECQATAWLVHKPECKRLKASFPNLPLTEVLFLSKVIDRIQFLEKNGDKLGIEAERKFSSLVDHKVDIRDDEEKMAHFEKIFEKMGAFRGEEMIEKGEFFDVFCKATINSHSIHTNAGNEVGMALDLGVSKYNHSCRPTCSMVFDGYRVCLRPLVPGVDAENTEEAFISYIDVGRSKYIRRRDLNSRWYFNCECTRCMDPEDDALTAIRCANPACDAPILTSETEEPMNIACEKCKTIVEEDTVKAAQEYMKTLPASFDPKCPAEIEALPGKLKELLAKAEQILHPSNVYVARLRTALFHVTGTLTMDNLSSMHTQIYNNYKMCFPKADRHVGFQLLHIVKALIEKDERDEAMPYAFDAMNIFEVCFGLDHPYYLQTLALWTYLEKKIPKSTEELVQLTNFSDNRPIDIVSLLKRANMLPPPPYAAGTPGVA.

Zn(2+) is bound by residues Cys-49, Cys-52, Cys-65, Cys-68, Cys-74, Cys-78, His-86, and Cys-90. The MYND-type zinc finger occupies 49–90; that stretch reads CANCLRGPAPGEKLLRCGGCNFSMYCSKECQATAWLVHKPEC.

This sequence belongs to the class V-like SAM-binding methyltransferase superfamily. Histone-lysine methyltransferase family. Expressed in pharyngeal and body wall muscles.

It carries out the reaction L-lysyl(36)-[histone H3] + 2 S-adenosyl-L-methionine = N(6),N(6)-dimethyl-L-lysyl(36)-[histone H3] + 2 S-adenosyl-L-homocysteine + 2 H(+). Histone methyltransferase. Specifically methylates 'Lys-36' of histone H3, inducing di-methylation. Plays a role in modulating lifespan and oxidative stress resistance, in a manner dependent upon daf-16/Forkhead box protein O and the Insulin/IGF-1-like signaling (IIS) mediated pathway. Represses transcription of daf-16 isoform a, perhaps by methylating histone H3 at the daf-16 promoter, which in turn leads to recruitment of histone deacetylases and thus modulation of expression. The protein is Histone-lysine N-methyltransferase set-18 of Caenorhabditis elegans.